We begin with the raw amino-acid sequence, 1219 residues long: Protein jagged-1 (1219 aa).

The signal sequence occupies residues 1 to 33; that stretch reads MRSPRTRGRPGRPLSLLLALLCALRAKVCGASG. Topologically, residues 34-1067 are extracellular; that stretch reads QFELEILSMQ…QRRPLKNRTD (1034 aa). A glycan (N-linked (GlcNAc...) asparagine) is linked at N143. Residues 185–229 form the DSL domain; sequence VTCDDHYYGFGCNKFCRPRDDFFGHYACDQNGNKTCMEGWMGPEC. 2 disulfide bridges follow: C187-C196 and C200-C212. An important for interaction with NOTCH1 region spans residues 199–207; that stretch reads FCRPRDDFF. N217 carries N-linked (GlcNAc...) asparagine glycosylation. 40 cysteine pairs are disulfide-bonded: C220–C229, C234–C245, C238–C251, C253–C262, C265–C276, C271–C282, C284–C293, C300–C312, C306–C322, C324–C333, C340–C351, C345–C360, C362–C371, C378–C389, C383–C398, C400–C409, C416–C427, C421–C436, C438–C447, C454–C464, C458–C473, C475–C484, C491–C502, C496–C511, C513–C522, C529–C540, C534–C549, C551–C560, C578–C605, C599–C615, C617–C626, C633–C644, C638–C653, C655–C664, C671–C682, C676–C691, C693–C702, C709–C720, C714–C729, and C731–C740. Positions 230-263 constitute an EGF-like 1 domain; that stretch reads NKAICRQGCSPKHGSCKLPGDCRCQYGWQGLYCD. The EGF-like 2; atypical domain maps to 264 to 294; the sequence is KCIPHPGCVHGTCNEPWQCLCETNWGGQLCD. 2 EGF-like domains span residues 296–334 and 336–372; these read DLNY…PNCE and AEHA…PTCS. The EGF-like 5; calcium-binding domain maps to 374 to 410; that stretch reads NIDDCSPNNCSHGGTCQDLVNGFKCVCPPQWTGKTCQ. An N-linked (GlcNAc...) asparagine glycan is attached at N382. An EGF-like 6; calcium-binding domain is found at 412-448; that stretch reads DANECEAKPCVNARSCKNLIASYYCDCLPGWMGQNCD. The EGF-like 7; calcium-binding domain maps to 450–485; it reads NINDCLGQCQNDASCRDLVNGYRCICPPGYAGDHCE. The 37-residue stretch at 487–523 folds into the EGF-like 8; calcium-binding domain; that stretch reads DIDECASNPCLNGGHCQNEINRFQCLCPTGFSGNLCQ. EGF-like domains are found at residues 525 to 561 and 586 to 627; these read DIDY…KNCS and DTPE…TYCH. An N-linked (GlcNAc...) asparagine glycan is attached at N559. Residues 629 to 665 enclose the EGF-like 11; calcium-binding domain; that stretch reads NINDCEGNPCTNGGTCIDGVNSYKCICSDGWEGAHCE. Positions 667–703 constitute an EGF-like 12; calcium-binding domain; that stretch reads NINDCSQNPCHYGGTCRDLVNDFYCDCKNGWKGKTCH. 2 EGF-like domains span residues 705–741 and 744–780; these read RDSQ…TTCN and RNSS…PICT. N745 is a glycosylation site (N-linked (GlcNAc...) asparagine). Intrachain disulfides connect C748/C759, C753/C768, C770/C779, C786/C797, C791/C806, C808/C817, C824/C835, C829/C844, C846/C855, C925/C936, and C948/C958. Positions 782 to 818 constitute an EGF-like 15; calcium-binding domain; it reads NTNDCSPHPCYNSGTCVDGDNWYRCECAPGFAGPDCR. The EGF-like 16; calcium-binding domain occupies 820-856; the sequence is NINECQSSPCAFGATCVDEINGYQCICPPGHSGAKCH. 4 N-linked (GlcNAc...) asparagine glycosylation sites follow: N960, N991, N1045, and N1064. A helical transmembrane segment spans residues 1068 to 1093; it reads FLVPLLSSVLTVAWVCCLVTAFYWCV. At 1094 to 1219 the chain is on the cytoplasmic side; it reads RKRRRKPSSH…QSLNRMEYIV (126 aa). The segment at 1182 to 1219 is disordered; it reads REEKVPQRTPTKHPNWTNKQDNRDLESAQSLNRMEYIV. Residues 1189-1200 show a composition bias toward polar residues; that stretch reads RTPTKHPNWTNK.

As to quaternary structure, interacts with NOTCH1. Interacts with NOTCH2 and NOTCH3. In terms of tissue distribution, widely expressed in a variety of tissues.

Its subcellular location is the membrane. The protein localises to the cell membrane. Ligand for multiple Notch receptors and involved in the mediation of Notch signaling. May be involved in cell-fate decisions during hematopoiesis. Enhances fibroblast growth factor-induced angiogenesis (in vitro). Seems to be involved in early and late stages of mammalian cardiovascular development. Inhibits myoblast differentiation. May regulate fibroblast growth factor-induced angiogenesis. The protein is Protein jagged-1 (Jag1) of Rattus norvegicus (Rat).